We begin with the raw amino-acid sequence, 355 residues long: UPF0421 protein BALH_2468 (355 aa).

4 consecutive transmembrane segments (helical) span residues 19 to 39 (IAVFLTVLVCEFFNIPTIFAV), 74 to 94 (FTFFLGHQALSYALAAMFTIV), 109 to 129 (TLTAVAMIPITADHYFTAFLI), and 131 to 151 (LATTSTGIIVSTVVNFFILPP).

Belongs to the UPF0421 family.

It localises to the cell membrane. This is UPF0421 protein BALH_2468 from Bacillus thuringiensis (strain Al Hakam).